A 679-amino-acid chain; its full sequence is MATLITSTTAATAASGPLVDYLWMLILGFIIAFVLAFSVGANDVANSFGTAVGSGVVTLKQACILASIFETVGSVLLGAKVSETIRKGLIDVEMYNSTQGLLMAGSVSAMFGSAVWQLVASFLKLPISGTHCIVGATIGFSLVAKGQEGVKWSELIKIVMSWFVSPLLSGIMSGILFFLVRAFILHKADPVPNGLRALPVFYACTVGINLFSIMYTGAPLLGFDKLPLWGTILISVGCAVFCALIVWFFVCPRMKRKIEREIKCSPSESPLMEKKNSLKEDHEETKLSVGDIENKHPVSEVGPATVPLQAVVEERTVSFKLGDLEEAPERERLPSVDLKEETSIDSTVNGAVQLPNGNLVQFSQAVSNQINSSGHYQYHTVHKDSGLYKELLHKLHLAKVGDCMGDSGDKPLRRNNSYTSYTMAICGMPLDSFRAKEGEQKGEEMEKLTWPNADSKKRIRMDSYTSYCNAVSDLHSASEIDMSVKAEMGLGDRKGSNGSLEEWYDQDKPEVSLLFQFLQILTACFGSFAHGGNDVSNAIGPLVALYLVYDTGDVSSKVATPIWLLLYGGVGICVGLWVWGRRVIQTMGKDLTPITPSSGFSIELASALTVVIASNIGLPISTTHCKVGSVVSVGWLRSKKAVDWRLFRNIFMAWFVTVPISGVISAAIMAIFRYVILRM.

6 consecutive transmembrane segments (helical) span residues 21–41 (YLWM…SVGA), 62–82 (ACIL…AKVS), 100–120 (GLLM…QLVA), 158–178 (IVMS…ILFF), 203–223 (ACTV…LLGF), and 230–250 (GTIL…WFFV). Phosphoserine is present on residues Ser-265 and Ser-269. Helical transmembrane passes span 511 to 531 (VSLL…FAHG), 558 to 578 (VATP…GLWV), 600 to 620 (FSIE…GLPI), and 650 to 670 (IFMA…AIMA). An a region spans residues 550–558 (DTGDVSSKV).

Belongs to the inorganic phosphate transporter (PiT) (TC 2.A.20) family. As to expression, ubiquitously expressed.

It is found in the cell membrane. The enzyme catalyses 2 Na(+)(out) + phosphate(out) = 2 Na(+)(in) + phosphate(in). Functionally, sodium-phosphate symporter which preferentially transports the monovalent form of phosphate with a stoichiometry of two sodium ions per phosphate ion. May play a role in extracellular matrix and cartilage calcification as well as in vascular calcification. Essential for cell proliferation but this function is independent of its phosphate transporter activity. Its function is as follows. (Microbial infection) May function as a retroviral receptor as it confers human cells susceptibility to infection to Gibbon Ape Leukemia Virus (GaLV), Simian sarcoma-associated virus (SSAV) and Feline leukemia virus subgroup B (FeLV-B) as well as 10A1 murine leukemia virus (10A1 MLV). The chain is Sodium-dependent phosphate transporter 1 (SLC20A1) from Homo sapiens (Human).